The primary structure comprises 87 residues: Dynein light chain 1, cytoplasmic (87 aa).

The protein belongs to the dynein light chain family. In terms of assembly, homodimer. Cytoplasmic dynein consists of two catalytic heavy chains (HCs) and a number of non-catalytic subunits which present intermediate chains (ICs), light intermediate chains (LICs) and light chains (LCs). Component of the nuclear pore complex (NPC). NPC constitutes the exclusive means of nucleocytoplasmic transport. NPCs allow the passive diffusion of ions and small molecules and the active, nuclear transport receptor-mediated bidirectional transport of macromolecules such as proteins, RNAs, ribonucleoparticles (RNPs), and ribosomal subunits across the nuclear envelope. Due to its 8-fold rotational symmetry, all subunits are present with 8 copies or multiples thereof.

It localises to the cytoplasm. Its subcellular location is the cytoskeleton. The protein localises to the nucleus. The protein resides in the nuclear pore complex. Acts as one of several non-catalytic accessory components of the cytoplasmic dynein complex that are thought to be involved in linking dynein to cargos and to adapter proteins that regulate dynein function. Cytoplasmic dynein 1 acts as a motor for the intracellular retrograde motility of vesicles and organelles along microtubules. May play a role in changing or maintaining the spatial distribution of cytoskeletal structures. Also a component of the nuclear pore complex. This chain is Dynein light chain 1, cytoplasmic (DYN2), found in Kluyveromyces lactis (strain ATCC 8585 / CBS 2359 / DSM 70799 / NBRC 1267 / NRRL Y-1140 / WM37) (Yeast).